The following is a 131-amino-acid chain: Large ribosomal subunit protein eL32 (131 aa).

The protein belongs to the eukaryotic ribosomal protein eL32 family. In terms of assembly, component of the large ribosomal subunit (LSU). Mature N.crassa ribosomes consist of a small (40S) and a large (60S) subunit. The 40S small subunit contains 1 molecule of ribosomal RNA (18S rRNA) and at least 32 different proteins. The large 60S subunit contains 3 rRNA molecules (26S, 5.8S and 5S rRNA) and at least 42 different proteins.

It is found in the cytoplasm. Component of the ribosome, a large ribonucleoprotein complex responsible for the synthesis of proteins in the cell. The small ribosomal subunit (SSU) binds messenger RNAs (mRNAs) and translates the encoded message by selecting cognate aminoacyl-transfer RNA (tRNA) molecules. The large subunit (LSU) contains the ribosomal catalytic site termed the peptidyl transferase center (PTC), which catalyzes the formation of peptide bonds, thereby polymerizing the amino acids delivered by tRNAs into a polypeptide chain. The nascent polypeptides leave the ribosome through a tunnel in the LSU and interact with protein factors that function in enzymatic processing, targeting, and the membrane insertion of nascent chains at the exit of the ribosomal tunnel. The polypeptide is Large ribosomal subunit protein eL32 (crp-63) (Neurospora crassa (strain ATCC 24698 / 74-OR23-1A / CBS 708.71 / DSM 1257 / FGSC 987)).